The primary structure comprises 260 residues: MFKKYSIFIAALTAFLLVAGCSSNQSSTDSEKKVTLTISAAASAQDALEEIQKNYEKDHQHITIQDNYGSSGALQKQISQGAGADLFFSAAEDKFKKLVDDGDIAKKDSTELVGNEIVLVVPKNGDSPVTSFSNLAESEKIALGTPESVPAGAYGKESLTKLSLWDKVKDKIVYGKDVRQVLSYVETGNVDAGVVYKTDALVSKKVNIVDEAKADTHSPIVYPLGIVKDTKHRKEAKEFYEYLQSDEAMKVFEKYGFTAE.

Residues 1–20 form the signal peptide; the sequence is MFKKYSIFIAALTAFLLVAG. The N-palmitoyl cysteine moiety is linked to residue Cys21. A lipid anchor (S-diacylglycerol cysteine) is attached at Cys21. Ser43, Ser71, Ala151, Val178, and Tyr196 together coordinate molybdate.

Belongs to the bacterial solute-binding protein ModA family.

The protein localises to the cell membrane. This chain is Putative ABC transporter substrate-binding lipoprotein YvgL (yvgL), found in Bacillus subtilis (strain 168).